A 387-amino-acid polypeptide reads, in one-letter code: uncharacterized protein (387 aa).

A disordered region spans residues 1-23; it reads MSSLPRNAVARNSKMHKKRDSGV. Residues 98–129 are a coiled coil; the sequence is KIARDLKKRQEDYEKTKLEVERLKRSEELANK. Residues 146-255 are disordered; the sequence is ENNTVEPNNE…NKKKKKEKNK (110 aa). Composition is skewed to low complexity over residues 162-175 and 182-194; these read EQIT…TTEQ and EQTT…QTAE. The segment covering 204-213 has biased composition (basic and acidic residues); the sequence is TVEKSGDQST. Positions 214 to 231 are enriched in polar residues; that stretch reads EKTTQQTAEESVEQSTEQ.

This is an uncharacterized protein from Acanthamoeba polyphaga mimivirus (APMV).